The primary structure comprises 62 residues: Metallothionein-4 (62 aa).

Positions 6, 8, 14, 16, 20, 22, 25, 27, 30, 34, 35, 37, 38, 42, 45, 49, 51, 58, 60, and 61 each coordinate a divalent metal cation.

The protein belongs to the metallothionein superfamily. Type 1 family. As to expression, expressed exclusively in stratified squamous epithelia associated with oral epithelia, esophagus, upper stomach, tail, footpads and neonatal skin.

In terms of biological role, seems to bind zinc and copper. Could play a special role in regulating zinc metabolism during the differentiation of stratified epithelia. The sequence is that of Metallothionein-4 (Mt4) from Mus musculus (Mouse).